Here is a 285-residue protein sequence, read N- to C-terminus: Dermonecrotic toxin LiSicTox-alphaIA2aii (285 aa).

Residues 1-5 (DVEER) constitute a propeptide that is removed on maturation. The active site involves H17. Mg(2+)-binding residues include E37 and D39. The active-site Nucleophile is the H53. Cystine bridges form between C57-C63 and C59-C202. D97 is a Mg(2+) binding site. N262 is a glycosylation site (N-linked (GlcNAc...) asparagine).

It belongs to the arthropod phospholipase D family. Class II subfamily. Class IIa sub-subfamily. Mg(2+) is required as a cofactor. Expressed by the venom gland.

It localises to the secreted. It carries out the reaction an N-(acyl)-sphingosylphosphocholine = an N-(acyl)-sphingosyl-1,3-cyclic phosphate + choline. The enzyme catalyses an N-(acyl)-sphingosylphosphoethanolamine = an N-(acyl)-sphingosyl-1,3-cyclic phosphate + ethanolamine. It catalyses the reaction a 1-acyl-sn-glycero-3-phosphocholine = a 1-acyl-sn-glycero-2,3-cyclic phosphate + choline. The catalysed reaction is a 1-acyl-sn-glycero-3-phosphoethanolamine = a 1-acyl-sn-glycero-2,3-cyclic phosphate + ethanolamine. Functionally, dermonecrotic toxins cleave the phosphodiester linkage between the phosphate and headgroup of certain phospholipids (sphingolipid and lysolipid substrates), forming an alcohol (often choline) and a cyclic phosphate. This toxin acts on sphingomyelin (SM) with high activity. It may also act on ceramide phosphoethanolamine (CPE), lysophosphatidylcholine (LPC) and lysophosphatidylethanolamine (LPE), but not on lysophosphatidylserine (LPS), and lysophosphatidylglycerol (LPG). It acts by transphosphatidylation, releasing exclusively cyclic phosphate products as second products. Shows high hemolytic activity. Induces dermonecrosis, vascular permeability, edema, inflammatory response, and platelet aggregation. Also shows cytotoxicity against renal epithelial cells. In addition, also induces hemolysis in a complement-dependent manner and probably also in a complement-independent manner. The hemolysis provoked in a complement-independent manner may be composed of several steps. The toxin may bind to erythrocyte membranes, may hydrolyze membrane phospholipids (SM and LPC) thus generating metabolism products that may cause hemolysis, probably by provoking an increase of calcium inside cells. The calcium influx may be due to the opening of L-type calcium channels, since L-type calcium channel blockers inhibit calcium influx. In vivo, is lethal to mice when intraperitoneally injected. The sequence is that of Dermonecrotic toxin LiSicTox-alphaIA2aii from Loxosceles intermedia (Brown spider).